The following is a 344-amino-acid chain: L-rhamnose-proton symporter (344 aa).

A run of 10 helical transmembrane segments spans residues A4 to A24, W38 to L58, F68 to I88, M101 to I121, T137 to L157, L175 to A195, L214 to I234, V259 to G279, I290 to L310, and V323 to A343.

The protein belongs to the L-rhamnose transporter (TC 2.A.7.6) family.

The protein resides in the cell inner membrane. It catalyses the reaction L-rhamnopyranose(in) + H(+)(in) = L-rhamnopyranose(out) + H(+)(out). Functionally, uptake of L-rhamnose across the cytoplasmic membrane with the concomitant transport of protons into the cell (symport system). This chain is L-rhamnose-proton symporter, found in Escherichia coli O1:K1 / APEC.